Here is a 278-residue protein sequence, read N- to C-terminus: MEMLEEHRCFEGWQQRWRHDSSTLNCPMTFSIFLPPPRDHTPPPVLYWLSGLTCNDENFTTKAGAQRVAAELGIVLVMPDTSPRGEKVANDDGYDLGQGAGFYLNATQPPWATHYRMYDYLRDELPALVQSQFNVSDRCAISGHSMGGHGALIMALKNPGKYTSVSAFAPIVNPCSVPWGIKAFSTYLGEDKNAWLEWDSCALMYASNAQDAIPTLIDQGDNDQFLADQLQPAVLAEAARQKAWPMTLRIQPGYDHSYYFIASFIEDHLRFHAQYLLK.

Active-site charge relay system residues include serine 145, aspartate 223, and histidine 256.

The protein belongs to the esterase D family.

It catalyses the reaction S-formylglutathione + H2O = formate + glutathione + H(+). Its function is as follows. Serine hydrolase involved in the detoxification of formaldehyde. Hydrolyzes S-formylglutathione to glutathione and formate. This is S-formylglutathione hydrolase YeiG (yeiG) from Shigella flexneri serotype 5b (strain 8401).